The primary structure comprises 555 residues: MFYSKSRPQHAARTNVAQAAANEKPKVPELEEFLTKRDYLGAIALLSFRRHANRNDLKNLEWLAYCYFHYGEHDKALVIYKELLQHEDPDPMFFVYSAACLYYMGMYKEAEEQALQGPKCALQTRILFHSAQRQGNDDKLMAYHGQLTDSIEDQLTLASIHYQRSHFQEATDIYKRLLLEHRDYLRSTVVYVALCYCKLDYYDVSLEILGVYLSAFPDSAIAVNLKACNHFRMYNGKAAEAELKTLAELSGGQHLDHDLIRHNLVVFRGGENALQVLPPLSDIPPEARLNLVIHHLRHHEVGEAFGLIKDMEPSTPPEFILKAVVHAMLGQVKGDPEHLKKAQQYYQLVGASASECDTIPGRQCMASCFFLLKQFEDVLVFLSSIKTYFLNDDDFNWNLGIAKAATGKYKEAEETLLQIANDKYRNEYTYTSWLARCYIMNGKARLAWERYLQLETNDESYQLLLLIANDCYKMGAFYFACKAFDVLERLDPAPEYLEGKKGAACGAFQMIVAGKEPKDLLRDVISLLRGNNSADQCEPIVAVMRKWAKNNGVKL.

3 TPR repeats span residues 57–90 (LKNL…EDPD), 151–184 (IEDQ…HRDY), and 393–426 (DDFN…KYRN).

This sequence belongs to the IFT56 family. In terms of assembly, component of the IFT complex B.

It localises to the cell projection. The protein localises to the cilium. The protein resides in the flagellum. Component of the intraflagellar transport (IFT) complex B required for transport of proteins in the motile cilium. Required for transport of specific ciliary cargo proteins related to motility, while it is neither required for IFT complex B assembly or motion nor for cilium assembly. The protein is Intraflagellar transport protein 56 of Chlamydomonas reinhardtii (Chlamydomonas smithii).